The following is a 454-amino-acid chain: Probable N-octanoylanthranilate hydrolase AqdA2 (454 aa).

S185 (acyl-ester intermediate) is an active-site residue. Residues E306 and H379 each act as charge relay system in the active site.

It belongs to the type-B carboxylesterase/lipase family.

It carries out the reaction N-octanoylanthranilate + H2O = anthranilate + octanoate + H(+). Involved in the degradation of the Pseudomonas aeruginosa quorum sensing signal molecules HHQ (2-heptyl-4-quinolone) and PQS (2-heptyl-3-hydroxy-4-quinolone) to anthranilic acid. Probably catalyzes the hydrolysis of N-octanoylanthranilic acid to anthranilic acid. The sequence is that of Probable N-octanoylanthranilate hydrolase AqdA2 from Rhodococcus erythropolis (Arthrobacter picolinophilus).